The primary structure comprises 31 residues: Ranatuerin-2Ca (31 aa).

A disulfide bridge links Cys24 with Cys29.

In terms of tissue distribution, expressed by the skin glands.

Its subcellular location is the secreted. Functionally, antibacterial activity against Gram-positive bacterium S.aureus and Gram-negative bacterium E.coli. Has activity against C.albicans. The protein is Ranatuerin-2Ca of Lithobates clamitans (Green frog).